The following is a 331-amino-acid chain: HTH-type transcriptional regulator GntR (331 aa).

The HTH lacI-type domain maps to 6–60 (PVLQDVADRVGVTKMTVSRFLRNPEQVSVALRGKIAAALDELGYIPNRAPDILSN). Residues 8–27 (LQDVADRVGVTKMTVSRFLR) constitute a DNA-binding region (H-T-H motif).

Its pathway is carbohydrate acid metabolism; D-gluconate degradation [regulation]. Negative regulator for the gluconate utilization system GNT-I, the gntUKR operon. In Escherichia coli O6:H1 (strain CFT073 / ATCC 700928 / UPEC), this protein is HTH-type transcriptional regulator GntR (gntR).